Reading from the N-terminus, the 698-residue chain is Probable microcin-H47 secretion/processing ATP-binding protein MchF (698 aa).

The Peptidase C39 domain maps to 26-145 (QTETAECGLA…RYFTGIALEV (120 aa)). Residue C32 is part of the active site. A run of 5 helical transmembrane segments spans residues 33-53 (GLAC…LISL), 90-110 (LGAL…VVLV), 289-311 (TCVV…MLLY), 315-337 (LTWI…YGYY), and 397-417 (LLFG…ILWL). The region spanning 176–458 (LAKIFCLSVV…LTSFLLQLRI (283 aa)) is the ABC transmembrane type-1 domain. The ABC transporter domain occupies 492–698 (LETTDLSYRY…LRTVDRIISI (207 aa)). 526 to 533 (GASGAGKT) provides a ligand contact to ATP.

The protein belongs to the ABC transporter superfamily.

The protein localises to the cell membrane. Functionally, probably involved, in conjunction with MchE, in the secretion of microcin H47. In Escherichia coli, this protein is Probable microcin-H47 secretion/processing ATP-binding protein MchF (mchF).